Here is a 221-residue protein sequence, read N- to C-terminus: Transcriptional regulator GfcR (221 aa).

The disordered stretch occupies residues 35–59; sequence ASWLVERSQPTDNSQSSSANNPTEA. The span at 42–57 shows a compositional bias: polar residues; that stretch reads SQPTDNSQSSSANNPT.

The protein belongs to the purine/pyrimidine phosphoribosyltransferase family. GfcR subfamily.

Its function is as follows. DNA-binding transcriptional regulator that functions as a regulator of central sugar catabolic pathways. This Haloquadratum walsbyi (strain DSM 16790 / HBSQ001) protein is Transcriptional regulator GfcR.